Consider the following 90-residue polypeptide: Small ribosomal subunit protein uS15c (90 aa).

This sequence belongs to the universal ribosomal protein uS15 family. Part of the 30S ribosomal subunit.

It is found in the plastid. The protein localises to the chloroplast. In Citrus sinensis (Sweet orange), this protein is Small ribosomal subunit protein uS15c (rps15).